The chain runs to 203 residues: Glycerol-3-phosphate acyltransferase (203 aa).

A run of 5 helical transmembrane segments spans residues 2–22, 54–74, 80–100, 114–134, and 153–173; these read LATL…AILV, CLVL…AYFL, ALGL…FFGF, LPIG…MVAI, and TWLI…LIIF.

The protein belongs to the PlsY family. Probably interacts with PlsX.

It localises to the cell inner membrane. It carries out the reaction an acyl phosphate + sn-glycerol 3-phosphate = a 1-acyl-sn-glycero-3-phosphate + phosphate. The protein operates within lipid metabolism; phospholipid metabolism. Catalyzes the transfer of an acyl group from acyl-phosphate (acyl-PO(4)) to glycerol-3-phosphate (G3P) to form lysophosphatidic acid (LPA). This enzyme utilizes acyl-phosphate as fatty acyl donor, but not acyl-CoA or acyl-ACP. In Pseudoalteromonas translucida (strain TAC 125), this protein is Glycerol-3-phosphate acyltransferase.